Consider the following 90-residue polypeptide: MVKNSIIPVISQEKKEKNPGSVEFQIFKFTDRIRRLTSHFELHRKDYLSQRGLRKILGKRQRLLSYLSKKDRIRYKKLINQFDIRESQIR.

The protein belongs to the universal ribosomal protein uS15 family. Part of the 30S ribosomal subunit.

Its subcellular location is the plastid. It localises to the chloroplast. The protein is Small ribosomal subunit protein uS15c (rps15) of Glycine max (Soybean).